Here is a 342-residue protein sequence, read N- to C-terminus: MAKRNAVVVTHTRLRQTGTVVAEAVSQLRVAGFEVAIIDNTEAPDFGVQPPCVSDDTEIVVVLGGDGTILRAAELVHCTQVPILGVNMGHVGFLAEFESFQIDEAIRRVSTHDYSIDERMIAHVDVWLPGATKPIEDWALNDITLERADRGKMVELSIRVDDVEMNSFGADGVIVSTPTGSTAYAFSAGGPVMWPNVKALQLIPLAAHALFARPLIIGSGSTFTIDILDDSMSEGWICCDGRRQRALPQGTRVMVRESRDTLRLARLSGVPFTNRLVSKFDLPVVGWREHARNEASSQSLHHGHTFPAAAYAAGVAVAVAGDAGVAGTDPDKPGERDGKAGA.

Asp66 serves as the catalytic Proton acceptor. Residues 66-67 (DG), Arg71, 141-142 (ND), Lys152, Asp171, 182-187 (TAYAFS), and Ala206 contribute to the NAD(+) site.

This sequence belongs to the NAD kinase family. Requires a divalent metal cation as cofactor.

The protein localises to the cytoplasm. It catalyses the reaction NAD(+) + ATP = ADP + NADP(+) + H(+). Its function is as follows. Involved in the regulation of the intracellular balance of NAD and NADP, and is a key enzyme in the biosynthesis of NADP. Catalyzes specifically the phosphorylation on 2'-hydroxyl of the adenosine moiety of NAD to yield NADP. The protein is NAD kinase of Bifidobacterium longum (strain NCC 2705).